A 534-amino-acid chain; its full sequence is Multicopper oxidase LPR1 homolog 3 (534 aa).

Residues histidine 84 and histidine 86 each coordinate Cu cation. The N-linked (GlcNAc...) asparagine glycan is linked to asparagine 109. 2 residues coordinate Cu cation: histidine 133 and histidine 135. In terms of domain architecture, Plastocyanin-like spans 219–291 (PFQAVQRRRY…VDFSLVVNPN (73 aa)). N-linked (GlcNAc...) asparagine glycans are attached at residues asparagine 234, asparagine 291, asparagine 312, asparagine 323, asparagine 341, and asparagine 372. Cu cation-binding residues include histidine 419, histidine 422, and histidine 424. Residue asparagine 450 is glycosylated (N-linked (GlcNAc...) asparagine). Cu cation is bound by residues histidine 515, cysteine 516, histidine 517, histidine 521, and methionine 526.

It belongs to the multicopper oxidase family. It depends on Cu cation as a cofactor. In terms of tissue distribution, expressed in roots and basal stems.

It is found in the endoplasmic reticulum membrane. Functionally, multicopper oxidase that may play a role in the maintenance of inorganic phosphate homeostasis. The protein is Multicopper oxidase LPR1 homolog 3 of Oryza sativa subsp. japonica (Rice).